Consider the following 128-residue polypeptide: Transcription antitermination protein NusB (128 aa).

This sequence belongs to the NusB family.

Functionally, involved in transcription antitermination. Required for transcription of ribosomal RNA (rRNA) genes. Binds specifically to the boxA antiterminator sequence of the ribosomal RNA (rrn) operons. This is Transcription antitermination protein NusB from Listeria innocua serovar 6a (strain ATCC BAA-680 / CLIP 11262).